Consider the following 33-residue polypeptide: Photosystem II reaction center protein Psb30 (33 aa).

A helical membrane pass occupies residues 5–25 (LIAQLTFLTSIIVSGPLVIAL).

This sequence belongs to the Psb30/Ycf12 family. In terms of assembly, PSII is composed of 1 copy each of membrane proteins PsbA, PsbB, PsbC, PsbD, PsbE, PsbF, PsbH, PsbI, PsbJ, PsbK, PsbL, PsbM, PsbT, PsbX, PsbY, PsbZ, Psb30/Ycf12, peripheral proteins of the oxygen-evolving complex and a large number of cofactors. It forms dimeric complexes.

The protein localises to the plastid. Its subcellular location is the chloroplast thylakoid membrane. A core subunit of photosystem II (PSII), probably helps stabilize the reaction center. The protein is Photosystem II reaction center protein Psb30 of Psilotum nudum (Whisk fern).